The sequence spans 566 residues: Mucolipin-2 (566 aa).

The Cytoplasmic portion of the chain corresponds to 1-65; sequence MPGDEETLDL…YRARRQIPWK (65 aa). The helical transmembrane segment at 66-86 threads the bilayer; that stretch reads LGLQILKIVMVTTQLVRFGLS. Residues 87–288 are Extracellular-facing; that stretch reads NQLVVAFKED…ISGSTQRSTH (202 aa). Residues 107 to 123 form an extracellular/lumenal pore loop region; that stretch reads KGFSGVDEDDYSCSIYT. 2 cysteine pairs are disulfide-bonded: cysteine 164-cysteine 190 and cysteine 243-cysteine 274. The chain crosses the membrane as a helical span at residues 289–309; that stretch reads YLLVFDVFVIMICLASLILCT. Over 310 to 346 the chain is Cytoplasmic; sequence RSIVLALRLRKRFLNFFLEKYKQRVCGADQWEFVNGW. A helical membrane pass occupies residues 347-367; the sequence is YVLVTISDLMTIIGSILKMEI. Residues 368–376 are Extracellular-facing; sequence KAKKLTNYD. A helical membrane pass occupies residues 377-397; sequence VCSILLGTSTLFVWVGVIRYL. Topologically, residues 398–419 are cytoplasmic; that stretch reads GYFQTYNVLILTMQASLPKVLR. The chain crosses the membrane as a helical span at residues 420-440; sequence FCACAGMIYLGYTFCGWIVLG. The Extracellular segment spans residues 441–448; sequence PYHEKFEN. The pore-forming intramembrane region spans 449 to 469; the sequence is LNIVAECLFSLVNGDDMFATF. Positions 461–464 match the Selectivity filter motif; it reads NGDD. Residues 470–480 are Extracellular-facing; it reads AQIQQKSILVW. Residues 481–502 form a helical membrane-spanning segment; sequence LFSRLYLYSFISLFIYMVLSLF. The Cytoplasmic portion of the chain corresponds to 503–566; that stretch reads IALITDSYHT…RSNDHLILID (64 aa).

Belongs to the transient receptor (TC 1.A.4) family. Polycystin subfamily. MCOLN2 sub-subfamily. As to quaternary structure, forms homooligomeric complexes; probably tetrameric. Can heterooligomerize with MCOLN1; heteromeric assemblies have different channel properties as compared to the respective homooligomers and may be tissue-specific. Interacts with TMEM176A. In terms of tissue distribution, expressed in activated macrophages and microglia (at protein level). Isoform 1 is widely expressed at very low levels. As to expression, isoform 2 is expressed at high levels in lymphoid tissues (thymus and spleen) and kidney, and at moderate levels in heart, lung, liver and stomach.

It localises to the cell membrane. Its subcellular location is the lysosome membrane. The protein localises to the recycling endosome membrane. It carries out the reaction Ca(2+)(in) = Ca(2+)(out). It catalyses the reaction Fe(2+)(in) = Fe(2+)(out). Fe(2+) channel activity is potentiated by low pH. Functionally, nonselective cation channel probably playing a role in the regulation of membrane trafficking events. Acts as a Ca(2+)-permeable cation channel with inwardly rectifying activity. May activate ARF6 and be involved in the trafficking of GPI-anchored cargo proteins to the cell surface via the ARF6-regulated recycling pathway. May play a role in immune processes. In adaptive immunity, TRPML2 and TRPML1 may play redundant roles in the function of the specialized lysosomes of B cells. In the innate immune response, may play a role in the regulation of chemokine secretion and macrophage migration. Through a possible and probably tissue-specific heteromerization with MCOLN1 may be at least in part involved in many lysosome-dependent cellular events. Also functions as a Fe(2+) permeable channel. The chain is Mucolipin-2 (Mcoln2) from Mus musculus (Mouse).